The sequence spans 534 residues: Phosphoenolpyruvate carboxykinase (ATP) (534 aa).

Residues Arg-60, Tyr-195, and Lys-201 each coordinate substrate. Residues Lys-201, His-221, and 237–245 (GLSGTGKTT) contribute to the ATP site. Mn(2+) is bound by residues Lys-201 and His-221. Asp-258 contributes to the Mn(2+) binding site. ATP-binding residues include Glu-287, Arg-324, and Thr-449. Arg-324 provides a ligand contact to substrate.

It belongs to the phosphoenolpyruvate carboxykinase (ATP) family. Mn(2+) is required as a cofactor.

The protein resides in the cytoplasm. The enzyme catalyses oxaloacetate + ATP = phosphoenolpyruvate + ADP + CO2. The protein operates within carbohydrate biosynthesis; gluconeogenesis. Its function is as follows. Involved in the gluconeogenesis. Catalyzes the conversion of oxaloacetate (OAA) to phosphoenolpyruvate (PEP) through direct phosphoryl transfer between the nucleoside triphosphate and OAA. The chain is Phosphoenolpyruvate carboxykinase (ATP) from Flavobacterium johnsoniae (strain ATCC 17061 / DSM 2064 / JCM 8514 / BCRC 14874 / CCUG 350202 / NBRC 14942 / NCIMB 11054 / UW101) (Cytophaga johnsonae).